Here is a 194-residue protein sequence, read N- to C-terminus: Translation machinery-associated protein 22 (194 aa).

The SUI1 domain occupies 102–173 (VQIKRVERNK…DVQDWLLEVY (72 aa)).

Belongs to the DENR family. Interacts with the 40S ribosomal subunit.

It localises to the cytoplasm. The polypeptide is Translation machinery-associated protein 22 (tma22) (Aspergillus oryzae (strain ATCC 42149 / RIB 40) (Yellow koji mold)).